Reading from the N-terminus, the 434-residue chain is Beta-enolase (434 aa).

Alanine 2 is modified (N-acetylalanine). Residue threonine 72 is modified to Phosphothreonine. Residues serine 83 and serine 157 each carry the phosphoserine modification. Substrate is bound by residues histidine 158 and glutamate 167. Position 176 is a phosphoserine (serine 176). Threonine 205 bears the Phosphothreonine mark. The active-site Proton donor is glutamate 210. Position 229 is a phosphothreonine (threonine 229). Residue tyrosine 236 is modified to Phosphotyrosine. Aspartate 245 contacts Mg(2+). Serine 263 bears the Phosphoserine mark. Residues glutamate 293 and aspartate 318 each coordinate substrate. Glutamate 293 and aspartate 318 together coordinate Mg(2+). The active-site Proton acceptor is the lysine 343. Substrate is bound by residues 370 to 373 and lysine 394; that span reads SHRS.

This sequence belongs to the enolase family. In terms of assembly, mammalian enolase is composed of 3 isozyme subunits, alpha, beta and gamma, which can form homodimers or heterodimers which are cell-type and development-specific. In vitro, interacts with several glycolytic enzymes including PKM, PGM, CKM and ALDO. Also binds PLG and troponin, in vitro. Interacts with PNKD. Mg(2+) is required as a cofactor. In terms of tissue distribution, brain (at protein level). The alpha/alpha homodimer is expressed in embryo and in most adult tissues. The alpha/beta heterodimer and the beta/beta homodimer are found in striated muscle, and the alpha/gamma heterodimer and the gamma/gamma homodimer in neurons. In striated muscle, the fiber-type order of ENO3 expression is IIB &gt; IIX &gt; IIA &gt; I.

The protein resides in the cytoplasm. The catalysed reaction is (2R)-2-phosphoglycerate = phosphoenolpyruvate + H2O. Its pathway is carbohydrate degradation; glycolysis; pyruvate from D-glyceraldehyde 3-phosphate: step 4/5. Functionally, glycolytic enzyme that catalyzes the conversion of 2-phosphoglycerate to phosphoenolpyruvate. Appears to have a function in striated muscle development and regeneration. The chain is Beta-enolase (Eno3) from Mus musculus (Mouse).